We begin with the raw amino-acid sequence, 796 residues long: Protein U58 (796 aa).

It belongs to the herpesviridae UL87 family.

In Elephas maximus (Indian elephant), this protein is Protein U58.